Here is a 568-residue protein sequence, read N- to C-terminus: Periplasmic trehalase (568 aa).

Residues 1–39 (MPYATARSGDVMSSAAPPCCTSLLGLSLSMFVAPGTLTA) form the signal peptide. Substrate is bound by residues arginine 169, 176-177 (WD), asparagine 213, 222-224 (RSQ), 294-296 (RPE), and glycine 327. Catalysis depends on proton donor/acceptor residues aspartate 329 and glutamate 511. Substrate is bound at residue glutamate 526.

Belongs to the glycosyl hydrolase 37 family.

The protein resides in the periplasm. The enzyme catalyses alpha,alpha-trehalose + H2O = alpha-D-glucose + beta-D-glucose. In terms of biological role, provides the cells with the ability to utilize trehalose at high osmolarity by splitting it into glucose molecules that can subsequently be taken up by the phosphotransferase-mediated uptake system. This chain is Periplasmic trehalase, found in Xanthomonas axonopodis pv. citri (strain 306).